We begin with the raw amino-acid sequence, 427 residues long: Enolase (427 aa).

Q163 provides a ligand contact to (2R)-2-phosphoglycerate. Catalysis depends on E205, which acts as the Proton donor. Mg(2+) is bound by residues D242, E285, and D312. Residues K337, R366, S367, and K388 each contribute to the (2R)-2-phosphoglycerate site. Residue K337 is the Proton acceptor of the active site.

Belongs to the enolase family. Mg(2+) serves as cofactor.

Its subcellular location is the cytoplasm. It is found in the secreted. It localises to the cell surface. It carries out the reaction (2R)-2-phosphoglycerate = phosphoenolpyruvate + H2O. Its pathway is carbohydrate degradation; glycolysis; pyruvate from D-glyceraldehyde 3-phosphate: step 4/5. Functionally, catalyzes the reversible conversion of 2-phosphoglycerate (2-PG) into phosphoenolpyruvate (PEP). It is essential for the degradation of carbohydrates via glycolysis. The sequence is that of Enolase from Beijerinckia indica subsp. indica (strain ATCC 9039 / DSM 1715 / NCIMB 8712).